The sequence spans 215 residues: MASATLPAWIKMPSFLKKILKLRGRRQEDESRSRMLSDSSTQSYQVNQLTSEGTEAGSTIPSTPSKGQALPTESKVRAREKSRHRRPKIIDQVRRVESLGEQASQRQKHMLETLINKIYTGPLGEELVQTLYLRIWAMEETPESLKILQMREDIRDQVLKMKTERWLRTLIRGEKTKLKDFQKRYEEVHPYLMKEKVEQIIMEEAWSLAAHIVQE.

Residues 12-34 (MPSFLKKILKLRGRRQEDESRSR) form a disordered region. Residues 15–22 (FLKKILKL) form an involved in self-degradation and in host STAT1 degradation region. Over residues 25-35 (RRQEDESRSRM) the composition is skewed to basic and acidic residues. The span at 36–66 (LSDSSTQSYQVNQLTSEGTEAGSTIPSTPSK) shows a compositional bias: polar residues.

It belongs to the respirovirus protein C family. As to quaternary structure, the different isoforms interact (via C-terminus) with unphosphorylated and phosphorylated human STAT1 (via N-terminus), favoring the formation of parallel STAT1 homodimers. The different isoforms do not interact with host STAT2. C protein interacts with L protein; this interaction has an inhibitory effect on viral transcription and replication. In terms of processing, protein Y1 is produced not only by alternative initiation, but also by proteolytic cleavage of C'. Only alternative initiation is detected in vitro, whereas in vivo cleavage seems to be predominant.

Its subcellular location is the host cytoplasm. Its function is as follows. The different products prevent the establishment of cellular antiviral state by blocking the interferon-alpha/beta (IFN-alpha/beta) and IFN-gamma signaling pathways. They inhibit IFN-alpha/beta induced tyrosine phosphorylation of STAT1 and STAT2. Blocking the IFN-alpha/beta pathway requires binding to STAT1 in the cytoplasm. They inhibit IFN-gamma induced serine phosphorylation of STAT1. Block the IFN-gamma pathway by binding to and stabilizing the parallel form of the STAT1 dimer, further inducing high-molecular-weight complex formation and inhibition of transcription by IFN-gamma. May also have a role in preventing the cell to enter apoptosis. Modulate regulation of viral transcription and replication. Overexpression inhibits the viral RNA polymerase. The absence of all C', C and Y1 proteins leads to viral delayed growth. Plays an important role in virion particles release. Modulates virion shape. This is Protein C' (P/V/C) from Sendai virus (strain Ohita) (SeV).